Reading from the N-terminus, the 1913-residue chain is GREB1-like protein (1913 aa).

Acidic residues predominate over residues 86–96; sequence MEDDEDEEEMS. Disordered stretches follow at residues 86–111, 281–309, 1097–1157, and 1179–1207; these read MEDD…KPAP, NGTS…SPRP, EAER…TSSI, and DSLD…LAWS. Positions 289–301 are enriched in low complexity; the sequence is KSSSCSSTPSRPG. Over residues 1118–1157 the composition is skewed to polar residues; the sequence is PQSNSSAVTGTSGSIMENGVSSSSTAGKPQQQLLTPTSSI. Low complexity predominate over residues 1187 to 1200; the sequence is SSTTSKPSSSSSSS. Residues 1832–1852 form a helical membrane-spanning segment; that stretch reads GVFFSGLLLYLCDSFVGADLL.

This sequence belongs to the GREB1 family. Expressed in the inner ear, with a high presence in the spiral ganglia, cochlear nerve bundles, and hair cells.

Its subcellular location is the membrane. Functionally, plays a major role in early metanephros and genital development. This is GREB1-like protein (Greb1l) from Mus musculus (Mouse).